A 287-amino-acid polypeptide reads, in one-letter code: mRNA-capping enzyme small subunit (287 aa).

As to quaternary structure, heterodimer of a large and a small subunit.

It localises to the virion. The catalysed reaction is a 5'-end (5'-triphosphoguanosine)-ribonucleoside in mRNA + S-adenosyl-L-methionine = a 5'-end (N(7)-methyl 5'-triphosphoguanosine)-ribonucleoside in mRNA + S-adenosyl-L-homocysteine. Catalyzes the last reaction in the mRNA cap formation pathway. The protein is mRNA-capping enzyme small subunit of Erythrocebus patas (Red guenon).